A 1365-amino-acid chain; its full sequence is Histone-lysine N-methyltransferase NSD2 (1365 aa).

Phosphothreonine is present on residues Thr110 and Thr114. The residue at position 121 (Ser121) is a Phosphoserine. A disordered region spans residues 149–170; that stretch reads ADVSQSEENGQKPENKARRNRK. Position 172 is a phosphoserine (Ser172). In terms of domain architecture, PWWP 1 spans 222–286; the sequence is VGDLVWSKVS…FEKSLVAFEG (65 aa). Phosphoserine is present on Ser376. 2 disordered regions span residues 376 to 455 and 516 to 658; these read SSGV…RKGD and EDSG…SKKS. Thr422 is modified (phosphothreonine). The HMG box DNA-binding region spans 453–521; that stretch reads KGDAASQFLV…VQAEEDSGNV (69 aa). Thr544 is subject to Phosphothreonine. A compositionally biased stretch (basic and acidic residues) spans 552-567; the sequence is DKHSLRKRDTITDKTA. Residues 580–590 show a composition bias toward polar residues; that stretch reads SLKSQAATKNL. Residues 606 to 622 show a composition bias toward low complexity; that stretch reads AASSALGFSKSSSPSAS. Ser614 carries the phosphoserine modification. Over residues 632 to 648 the composition is skewed to acidic residues; it reads PGDEPSESPYESADETQ. 3 PHD-type zinc fingers span residues 667 to 713, 714 to 770, and 831 to 875; these read EYVC…CASG, IHSC…CHAS, and VSWC…CRAG. The PWWP 2 domain occupies 880–942; the sequence is FQDIIWVKLG…QARVFPYMEG (63 aa). The AWS domain occupies 1011–1061; that stretch reads SEIPKCNCKPTDENPCGFDSECLNRMLMFECHPQVCPAGEFCQNQCFTKRQ. Cys1016, Cys1018, Cys1026, Cys1032, Cys1041, Cys1046, and Cys1052 together coordinate Zn(2+). One can recognise an SET domain in the interval 1063–1180; the sequence is PETKIIKTDG…AGTELTFNYN (118 aa). S-adenosyl-L-methionine is bound by residues Trp1075, 1115–1118, and 1141–1142; these read THFY and NH. Zn(2+) is bound at residue Cys1144. Position 1186 (Asn1186) interacts with S-adenosyl-L-methionine. The Post-SET domain occupies 1187–1203; that stretch reads EKTVCRCGASNCSGFLG. Cys1191 contacts Zn(2+). Arg1192 is an S-adenosyl-L-methionine binding site. Residues Cys1193 and Cys1198 each coordinate Zn(2+). Residues 1207-1232 form a disordered region; sequence KTSTTLSSEEKGKKTKKKTRRRRAKG. The span at 1219–1230 shows a compositional bias: basic residues; sequence KKTKKKTRRRRA. A PHD-type 4; atypical zinc finger spans residues 1239 to 1286; sequence EDECFRCGDGGQLVLCDRKFCTKAYHLSCLGLGKRPFGKWECPWHHCD. A disordered region spans residues 1333–1365; sequence VRSTKTEKPPPEPGKPKGKRRRRRGWRRVTEGK. Basic residues predominate over residues 1348 to 1359; the sequence is PKGKRRRRRGWR.

It belongs to the class V-like SAM-binding methyltransferase superfamily. Histone-lysine methyltransferase family. SET2 subfamily. In terms of assembly, interacts with HDAC1. Interacts (via PHD-type zinc fingers 1, 2 and 3) with SALL1. Interacts (via PHD-type 1, 2 and 3) with SALL4. Interacts with NANOG. Interacts with OGT. Interacts (via HMG box) with NKX2-5. Widely expressed. Predominantly expressed in thymus and testis.

It is found in the nucleus. The protein localises to the chromosome. It localises to the cytoplasm. The protein resides in the nucleolus. It carries out the reaction L-lysyl(36)-[histone H3] + S-adenosyl-L-methionine = N(6)-methyl-L-lysyl(36)-[histone H3] + S-adenosyl-L-homocysteine + H(+). The catalysed reaction is L-lysyl(36)-[histone H3] + 2 S-adenosyl-L-methionine = N(6),N(6)-dimethyl-L-lysyl(36)-[histone H3] + 2 S-adenosyl-L-homocysteine + 2 H(+). Its function is as follows. Histone methyltransferase which specifically dimethylates nucleosomal histone H3 at 'Lys-36' (H3K36me2). Also monomethylates nucleosomal histone H3 at 'Lys-36' (H3K36me) in vitro. Does not trimethylate nucleosomal histone H3 at 'Lys-36' (H3K36me3). However, specifically trimethylates histone H3 at 'Lys-36' (H3K36me3) at euchromatic regions in embryonic stem (ES) cells. By methylating histone H3 at 'Lys-36', involved in the regulation of gene transcription during various biological processes. In ES cells, associates with developmental transcription factors such as SALL1 and represses inappropriate gene transcription mediated by histone deacetylation. During heart development, associates with transcription factor NKX2-5 to repress transcription of NKX2-5 target genes. Plays an essential role in adipogenesis, by regulating expression of genes involved in pre-adipocyte differentiation. During T-cell receptor (TCR) and CD28-mediated T-cell activation, promotes the transcription of transcription factor BCL6 which is required for follicular helper T (Tfh) cell differentiation. During B-cell development, required for the generation of the B1 lineage. During B2 cell activation, may contribute to the control of isotype class switch recombination (CRS), splenic germinal center formation, and the humoral immune response. Plays a role in class switch recombination of the immunoglobulin heavy chain (IgH) locus during B-cell activation. By regulating the methylation of histone H3 at 'Lys-36' and histone H4 at 'Lys-20' at the IgH locus, involved in TP53BP1 recruitment to the IgH switch region and promotes the transcription of IgA. Functionally, histone methyltransferase which specifically dimethylates nucleosomal histone H3 at 'Lys-36' (H3K36me2). Histone methyltransferase which specifically dimethylates nucleosomal histone H3 at 'Lys-36' (H3K36me2). Methylation of histone H3 at 'Lys-27' is controversial. Mono-, di- or tri-methylates histone H3 at 'Lys-27' (H3K27me, H3K27me2 and H3K27me3). Does not methylate histone H3 at 'Lys-27'. May act as a transcription regulator that binds DNA and suppresses IL5 transcription through HDAC recruitment. The protein is Histone-lysine N-methyltransferase NSD2 of Homo sapiens (Human).